The following is a 222-amino-acid chain: 7-cyano-7-deazaguanine synthase (222 aa).

11–21 (FSGGQDSTTCL) lines the ATP pocket. 4 residues coordinate Zn(2+): cysteine 187, cysteine 195, cysteine 198, and cysteine 201.

The protein belongs to the QueC family. Zn(2+) serves as cofactor.

The catalysed reaction is 7-carboxy-7-deazaguanine + NH4(+) + ATP = 7-cyano-7-deazaguanine + ADP + phosphate + H2O + H(+). The protein operates within purine metabolism; 7-cyano-7-deazaguanine biosynthesis. Catalyzes the ATP-dependent conversion of 7-carboxy-7-deazaguanine (CDG) to 7-cyano-7-deazaguanine (preQ(0)). The sequence is that of 7-cyano-7-deazaguanine synthase from Actinobacillus pleuropneumoniae serotype 5b (strain L20).